A 1040-amino-acid polypeptide reads, in one-letter code: Multidrug resistance protein MdtB (1040 aa).

12 helical membrane passes run 16-36 (FIMR…AGII), 347-367 (LMMA…NIPA), 369-389 (IIPG…MVFL), 396-416 (LTLM…IVVI), 440-460 (IGFT…PLLF), 472-492 (FAIT…TLTP), 537-557 (WLTL…WVFI), 863-883 (LGST…VLGI), 888-908 (FIHP…ALLA), 911-931 (IAGS…IGIV), 968-988 (ILMT…STGV), and 998-1018 (IGMV…TPVI).

The protein belongs to the resistance-nodulation-cell division (RND) (TC 2.A.6) family. MdtB subfamily. In terms of assembly, part of a tripartite efflux system composed of MdtA, MdtB and MdtC. MdtB forms a heteromultimer with MdtC.

It localises to the cell inner membrane. This chain is Multidrug resistance protein MdtB, found in Shigella boydii serotype 4 (strain Sb227).